The following is a 580-amino-acid chain: 2-succinyl-5-enolpyruvyl-6-hydroxy-3-cyclohexene-1-carboxylate synthase (580 aa).

The protein belongs to the TPP enzyme family. MenD subfamily. As to quaternary structure, homodimer. The cofactor is Mg(2+). Requires Mn(2+) as cofactor. It depends on thiamine diphosphate as a cofactor.

It catalyses the reaction isochorismate + 2-oxoglutarate + H(+) = 5-enolpyruvoyl-6-hydroxy-2-succinyl-cyclohex-3-ene-1-carboxylate + CO2. It participates in quinol/quinone metabolism; 1,4-dihydroxy-2-naphthoate biosynthesis; 1,4-dihydroxy-2-naphthoate from chorismate: step 2/7. The protein operates within quinol/quinone metabolism; menaquinone biosynthesis. Catalyzes the thiamine diphosphate-dependent decarboxylation of 2-oxoglutarate and the subsequent addition of the resulting succinic semialdehyde-thiamine pyrophosphate anion to isochorismate to yield 2-succinyl-5-enolpyruvyl-6-hydroxy-3-cyclohexene-1-carboxylate (SEPHCHC). This chain is 2-succinyl-5-enolpyruvyl-6-hydroxy-3-cyclohexene-1-carboxylate synthase, found in Listeria innocua serovar 6a (strain ATCC BAA-680 / CLIP 11262).